A 670-amino-acid polypeptide reads, in one-letter code: Solute carrier organic anion transporter family member 1A1 (670 aa).

At 1-20 the chain is on the cytoplasmic side; that stretch reads MEETEKKVATQEGRFFSKMK. Residues 21 to 40 traverse the membrane as a helical segment; the sequence is VFLMSLTCAYLAKSLSGVYM. Residues 41–59 are Extracellular-facing; it reads NSMLTQIERQFGIPTSVVG. The chain crosses the membrane as a helical span at residues 60–80; sequence FITGSFEIGNLLLIVFVSYFG. The Cytoplasmic segment spans residues 81-86; sequence RKLHRP. A helical membrane pass occupies residues 87–111; that stretch reads IIIGVGCVVMGLGCFLMASPHFLMG. Topologically, residues 112 to 155 are extracellular; it reads RYKYETTISPTSNLSSNSFLCIENRTQTLKPTQDPTECVKEIKS. Asn-124 and Asn-135 each carry an N-linked (GlcNAc...) asparagine glycan. A helical transmembrane segment spans residues 156–184; sequence LMWIYVLIGNTMRGIGETPIMPLGISYIE. Residues 185 to 203 lie on the Cytoplasmic side of the membrane; sequence DFAKSENSPLYIGILEMGK. A helical transmembrane segment spans residues 204 to 224; that stretch reads IVGPIIGLLLGSFFARVYVDI. The Extracellular portion of the chain corresponds to 225-242; it reads GSVNTDDLTITPTDTRWV. A helical membrane pass occupies residues 243-267; the sequence is GAWWIGFLVCAGVNILTSIPFFFFP. Over 268-311 the chain is Cytoplasmic; that stretch reads KTLPKKELQDNVDVTKYEKVEKHRERAKKENLGITKDFLPFMKS. Residues 312-333 form a helical membrane-spanning segment; sequence LCCNPIYMLFSLTSVLQINGFA. Residues 334–353 lie on the Extracellular side of the membrane; the sequence is STFTFLPKYLEQQYGKSTSE. A helical transmembrane segment spans residues 354–377; it reads AVFLIGVYSLPPVCLGYLISGFIM. The Cytoplasmic portion of the chain corresponds to 378–381; that stretch reads KKFK. Residues 382–405 traverse the membrane as a helical segment; it reads ITVKKAAYIAFGLSLSEYFIFLCN. The Extracellular segment spans residues 406 to 513; that stretch reads YLLTCDNFPV…PECDNKLQYF (108 aa). Residues 433 to 488 enclose the Kazal-like domain; it reads KNVLADCNTRCSCLTDTWDPVCGDNGLAYMSACLAGCEKSVGTGTNMVFQNCSCIG. Cystine bridges form between Cys-439–Cys-469, Cys-445–Cys-465, and Cys-454–Cys-486. Residues Asn-483 and Asn-492 are each glycosylated (N-linked (GlcNAc...) asparagine). The chain crosses the membrane as a helical span at residues 514-536; it reads LIKSVFSSFIFSLAAIPGYMVLL. Residues 537-545 are Cytoplasmic-facing; that stretch reads RCVKSEEKS. The chain crosses the membrane as a helical span at residues 546–571; the sequence is IGVGLHAFFIRLLAGIPAPVYFGALI. Topologically, residues 572 to 605 are extracellular; that stretch reads DRTCLHWGTLKCGQPGACRMYDINRFRHIYLGLP. Residues 606–623 form a helical membrane-spanning segment; that stretch reads AAVRGSSFLPAVFILILM. The Cytoplasmic segment spans residues 624–670; it reads RKFHFPGDIHSPDTELAEMKLTEKESECTDVCRSPKVENDGELKTKL. The residue at position 634 (Ser-634) is a Phosphoserine.

The protein belongs to the organo anion transporter (TC 2.A.60) family. As to quaternary structure, binds to PDZK1. Interaction with PDZK1 is required for expression on hepatocyte surface. In terms of tissue distribution, highly expressed in liver, and at lower levels in kidney. Not detected in other tissues.

The protein resides in the basolateral cell membrane. It carries out the reaction estrone 3-sulfate(out) + hydrogencarbonate(in) = estrone 3-sulfate(in) + hydrogencarbonate(out). The enzyme catalyses taurocholate(out) + hydrogencarbonate(in) = taurocholate(in) + hydrogencarbonate(out). The catalysed reaction is L-thyroxine(out) = L-thyroxine(in). It catalyses the reaction prostaglandin E2(out) = prostaglandin E2(in). It carries out the reaction 17beta-estradiol 17-O-(beta-D-glucuronate)(out) = 17beta-estradiol 17-O-(beta-D-glucuronate)(in). The enzyme catalyses dehydroepiandrosterone 3-sulfate(out) = dehydroepiandrosterone 3-sulfate(in). Mediates the Na(+)-independent transport of organic anions such as steroid sulfate conjugates (dehydroepiandrosterone sulfate (DHEAS), 17-beta-glucuronosyl estradiol, estrone-3-sulfate), conjugated (taurocholate) and unconjugated (cholate) bile acids, prostaglandin E2 (PGE2) and L-thyroxine T4. Also capable of transporting sulfobromophthalein (BSP), ouabain and gadoxetate. Hydrogencarbonate/HCO3(-) acts as the probable counteranion that exchanges for organic anions. Shows a pH-sensitive substrate specificity which may be ascribed to the protonation state of the binding site and leads to a stimulation of substrate transport in an acidic microenvironment. The polypeptide is Solute carrier organic anion transporter family member 1A1 (Mus musculus (Mouse)).